The sequence spans 418 residues: (+)-T-muurolol synthase ((2E,6E)-farnesyl diphosphate cyclizing) (418 aa).

Residues D83 and D88 each contribute to the Mg(2+) site. The short motif at 83-88 (DDEYCD) is the DDXXXD motif element. Residue R179 participates in substrate binding. Residues N225 and S229 each contribute to the Mg(2+) site. K232 contacts substrate. Position 233 (E233) interacts with Mg(2+). Position 312-313 (312-313 (RY)) interacts with substrate. The segment at 354-418 (LPEPGSDGAD…QQSTWRREHR (65 aa)) is disordered. Polar residues predominate over residues 402-412 (ASRSSGLQQST).

The protein belongs to the terpene synthase family. Mg(2+) serves as cofactor.

The catalysed reaction is (2E,6E)-farnesyl diphosphate + H2O = (+)-T-muurolol + diphosphate. It participates in secondary metabolite biosynthesis; terpenoid biosynthesis. Its function is as follows. Catalyzes the conversion of (2E,6E)-farnesyl diphosphate (FPP) into (+)-T-muurolol via a 1,10-cyclization, which requires isomerization of FPP to nerolidyl diphosphate (NPP) and then abstraction of the pyrophosphate from intermediate NPP leading to a (E,Z)-germacradienyl (helminthogermacradienyl) cation. The protein is (+)-T-muurolol synthase ((2E,6E)-farnesyl diphosphate cyclizing) of Streptomyces clavuligerus.